The following is a 484-amino-acid chain: MASNQHSQRERTPDRSAQPPPPKMGRYFLDSESEEELEAVPLPPKKKVKKSMAAIPLSPESAEEEEAEPPRAVLGVMGFSMPPVRIMHHADGSQSFQKMETRQVHVLKASAQNSDENEKNVVVVRNPASQPLVSAWEKGMEAMAMLMEKYHVDHDERATFRFLPDQGSVYKKICTTWLNEEKRGLQLTFSSQKTFQELMGRFLQGYMQAYAGVQQNSWEPTGCCVWEHKCTEREGELRCLHGMEMVRKEHLVEMDVTSESGQRALKENPSKAKVAQNRWGRNVVQIKNDDARCCFHDVGCGNNSFSGKSCGLFYSEGMKAQIAFRQIEAFMLADYPHMRHGQKRLLMPVRCECLNKQDGLPRMGRQLCKITPFNLSNVDNIDINEVTDPGALASIKYPCLLVFQCANPVYRNARGNAGPNCDFKISAPDVMGALQLVRQLWGENFDGSPPRLVIPEFKWHQRLQYRNISLPTNHGDCREEPFDF.

The segment at methionine 1–proline 69 is disordered. Residues serine 51–glutamate 60 are compositionally biased toward low complexity. At tyrosine 150 the chain carries Phosphotyrosine; by host. Zn(2+) is bound by residues cysteine 239 and histidine 241. The tract at residues valine 252 to isoleucine 286 is flexible loop. Residues cysteine 294, cysteine 310, cysteine 351, cysteine 353, cysteine 405, and cysteine 421 each coordinate Zn(2+). The C-terminal arm, DBP binding stretch occupies residues isoleucine 468 to phenylalanine 484.

Belongs to the adenoviridae E2A DNA-binding protein family. In terms of assembly, homomultimerizes on viral ssDNA bound to pTP. Forms a initiation complex with viral polymerase, pTP and hosts NFIA and POU2F1/OCT1. Interacts with host SRCAP.

It is found in the host nucleus. Plays a role in the elongation phase of viral strand displacement replication by unwinding the template in an ATP-independent fashion, employing its capacity to form multimers. Also enhances the rate of initiation. Released from template upon second strand synthesis. Assembles in complex with viral pTP, viral pol, host NFIA and host POU2F1/OCT1 on viral origin of replication. Covers the whole ssDNA genome during synthesis. The complementary strand synthesis induces its relese from DNA template. May inhibit cellular transcription mediated by the interaction between host SRCAP and CBP. The sequence is that of DNA-binding protein from Human adenovirus A serotype 12 (HAdV-12).